Reading from the N-terminus, the 448-residue chain is Metacaspase-1 (448 aa).

The segment at 1–129 (MFPGQGRHTY…GHYSRPPTDS (129 aa)) is disordered. Residues 10 to 44 (YGGQQSNYSNQQQGYDQGYNQGYGQAYGQEYNQGY) show a composition bias toward low complexity. The segment covering 61 to 70 (SGPPPGPPPG) has biased composition (pro residues). Residues 99-114 (YGNNQTRGSGNEQNYG) show a composition bias toward polar residues. Catalysis depends on residues H231 and C292.

This sequence belongs to the peptidase C14B family.

Functionally, involved in cell death (apoptosis). The chain is Metacaspase-1 (MCA1) from Candida albicans (strain SC5314 / ATCC MYA-2876) (Yeast).